The following is a 395-amino-acid chain: S-adenosylmethionine synthase (395 aa).

ATP is bound at residue H16. D18 provides a ligand contact to Mg(2+). E44 is a K(+) binding site. E57 and Q100 together coordinate L-methionine. A flexible loop region spans residues 100 to 110; sequence QSPDIAQGVDR. ATP-binding positions include 167 to 169, 233 to 234, D242, 248 to 249, A265, and K269; these read DAK, RF, and RK. D242 lines the L-methionine pocket. L-methionine is bound at residue K273.

It belongs to the AdoMet synthase family. In terms of assembly, homotetramer; dimer of dimers. It depends on Mg(2+) as a cofactor. The cofactor is K(+).

The protein resides in the cytoplasm. It catalyses the reaction L-methionine + ATP + H2O = S-adenosyl-L-methionine + phosphate + diphosphate. Its pathway is amino-acid biosynthesis; S-adenosyl-L-methionine biosynthesis; S-adenosyl-L-methionine from L-methionine: step 1/1. Its function is as follows. Catalyzes the formation of S-adenosylmethionine (AdoMet) from methionine and ATP. The overall synthetic reaction is composed of two sequential steps, AdoMet formation and the subsequent tripolyphosphate hydrolysis which occurs prior to release of AdoMet from the enzyme. The chain is S-adenosylmethionine synthase from Burkholderia cenocepacia (strain HI2424).